A 137-amino-acid polypeptide reads, in one-letter code: Large-conductance mechanosensitive channel (137 aa).

3 consecutive transmembrane segments (helical) span residues 15–35, 38–58, and 80–100; these read IDLA…NSIV, ILMP…MFIQ, and GNFI…FLFV.

It belongs to the MscL family. As to quaternary structure, homopentamer.

It is found in the cell inner membrane. In terms of biological role, channel that opens in response to stretch forces in the membrane lipid bilayer. May participate in the regulation of osmotic pressure changes within the cell. The chain is Large-conductance mechanosensitive channel from Bartonella quintana (strain Toulouse) (Rochalimaea quintana).